A 396-amino-acid chain; its full sequence is Vacuolar protease A (396 aa).

A signal peptide spans 1–17 (MKGALLTAAMLLGSAQA). Positions 18-70 (GVHTMKLKKVPLAEQLESVPIDVQVQHLGQKYTGLRTESHTQAMFKATDAQVS) are cleaved as a propeptide — activation peptide. The Peptidase A1 domain occupies 85-392 (YFSEITIGTP…DLGADTVGIA (308 aa)). Aspartate 103 is a catalytic residue. A disulfide bridge links cysteine 116 with cysteine 121. The N-linked (GlcNAc...) asparagine glycan is linked to asparagine 138. Aspartate 284 is a catalytic residue. A disulfide bridge links cysteine 318 with cysteine 351. Residue asparagine 335 is glycosylated (N-linked (GlcNAc...) asparagine).

This sequence belongs to the peptidase A1 family.

It is found in the vacuole. In Neurospora crassa (strain ATCC 24698 / 74-OR23-1A / CBS 708.71 / DSM 1257 / FGSC 987), this protein is Vacuolar protease A (pep-4).